The following is a 185-amino-acid chain: CASP-like protein 5A1 (185 aa).

Over 1–48 (MNVSHPAVHPVGVPPALGGQAVPPRMRMRVRMEYLVFQGMPLPGSLGG) the chain is Cytoplasmic. Residues 49-69 (LMLRLGQFCSALIAFSVMVSI) form a helical membrane-spanning segment. Over 70-76 (RDFSVTA) the chain is Extracellular. A helical membrane pass occupies residues 77 to 97 (FCYLLAATVLQCLWSLALAVI). Over 98–121 (DVYALLVKRSLRNPLLVSIFVVGD) the chain is Cytoplasmic. A helical transmembrane segment spans residues 122–142 (GVTATLTFAAACASAGVVVLI). Residues 143–160 (GNDISMCKSNPCANYEAA) lie on the Extracellular side of the membrane. Residues 161-181 (IIMAFLSWFMVSISFVLTFWM) traverse the membrane as a helical segment. The Cytoplasmic segment spans residues 182–185 (LATL).

This sequence belongs to the Casparian strip membrane proteins (CASP) family. As to quaternary structure, homodimer and heterodimers.

Its subcellular location is the cell membrane. This chain is CASP-like protein 5A1, found in Pinus contorta (Shore pine).